Consider the following 799-residue polypeptide: Protein translocase subunit SecA 1 (799 aa).

ATP is bound by residues Q85, 103 to 107 (GEGKT), and D504.

The protein belongs to the SecA family. As to quaternary structure, monomer and homodimer. Part of the essential Sec protein translocation apparatus which comprises SecA, SecYEG and auxiliary proteins SecDF. Other proteins may also be involved.

Its subcellular location is the cell membrane. The protein resides in the cytoplasm. The enzyme catalyses ATP + H2O + cellular proteinSide 1 = ADP + phosphate + cellular proteinSide 2.. Functionally, part of the Sec protein translocase complex. Interacts with the SecYEG preprotein conducting channel. Has a central role in coupling the hydrolysis of ATP to the transfer of proteins into and across the cell membrane, serving as an ATP-driven molecular motor driving the stepwise translocation of polypeptide chains across the membrane. This is Protein translocase subunit SecA 1 from Lactobacillus johnsonii (strain CNCM I-12250 / La1 / NCC 533).